Here is a 445-residue protein sequence, read N- to C-terminus: MAPTPELSPETLARHLAVLGPASGYCVAYSGGLDSTVLLHLMAALSAARELPLRAVHIHHGLQPQADAWAEHCRQQAAALGVDCLVLPVEVRRDSGEGLEAAARQARYAALASHLQSGEALLTAHHADDQAETVLLHLLRGSGPRGLAGMRAQRPLGRGRLLRPLLPWPRERLRAYGDTHALCWVEDPSNAHVAHDRNWLRHTLWPVLTQRWPDASRRVGRAAGEQAEAEALLRELAGEDLARHPPGPGLAVSVLARLSPARARNLVRHWLLMSGLRPPPRARLEQGLADLIRAGRDRQPVLTWPEGELRRYRDRIHRLPAGGPPPWPGPDREWDLRVPLVVPGVGVLRLVRADEGIAPSLIGAEGLSVGRRRRGERCQLAHDPGHRPLSKRFQEAGIPPWERDRVPILRRGEEVVAIANLGTAKRFTARPGYRLICEEHGPDGG.

Residue 30 to 35 (SGGLDS) participates in ATP binding.

It belongs to the tRNA(Ile)-lysidine synthase family.

The protein resides in the cytoplasm. It catalyses the reaction cytidine(34) in tRNA(Ile2) + L-lysine + ATP = lysidine(34) in tRNA(Ile2) + AMP + diphosphate + H(+). Ligates lysine onto the cytidine present at position 34 of the AUA codon-specific tRNA(Ile) that contains the anticodon CAU, in an ATP-dependent manner. Cytidine is converted to lysidine, thus changing the amino acid specificity of the tRNA from methionine to isoleucine. The protein is tRNA(Ile)-lysidine synthase of Alkalilimnicola ehrlichii (strain ATCC BAA-1101 / DSM 17681 / MLHE-1).